The chain runs to 228 residues: Lipoprotein-releasing system ATP-binding protein LolD (228 aa).

The ABC transporter domain occupies 6-228; sequence IKCLNVVKGY…EAGVLNKQGQ (223 aa). 42-49 serves as a coordination point for ATP; it reads GASGSGKS.

Belongs to the ABC transporter superfamily. Lipoprotein translocase (TC 3.A.1.125) family. In terms of assembly, the complex is composed of two ATP-binding proteins (LolD) and two transmembrane proteins (LolC and LolE).

The protein localises to the cell inner membrane. Functionally, part of the ABC transporter complex LolCDE involved in the translocation of mature outer membrane-directed lipoproteins, from the inner membrane to the periplasmic chaperone, LolA. Responsible for the formation of the LolA-lipoprotein complex in an ATP-dependent manner. The protein is Lipoprotein-releasing system ATP-binding protein LolD of Saccharophagus degradans (strain 2-40 / ATCC 43961 / DSM 17024).